We begin with the raw amino-acid sequence, 1360 residues long: MLFVFLTLLPSCLGYIGDFRCINLVNTRISNARAPSVSTEVVDVSKGLGTYYVLDRVYLNATLLLTGYYPVDGSMYRNMALMGTNTLSLNWFEPPFLSEFNDGIYAKVKNLKASLPIGSASYFPTIIIGSNFVNTSYTVVLEPYNGIIMASICQYTICQLPHTDCKPNTGGNTLIGFWHTDLRPPVCILKRNFTFNVNAEWLYFHFYQQGGTFYAYYADVSSATTFLFSSYIGAVLTQYFVLPYMCSPTTSGVSSPQYWVTPLVKRQYLFNFNQKGIITSAVDCASSYTSEIKCKTQSMNPNTGVYDLSGYTVQPVGLVYRRVRNLPDCKIEEWLAANTVPSPLNWERKTFQNCNFNLSSLLRFVQAESLSCSNIDASKVYGMCFGSISIDKFAIPNSRRVDLQLGKSGLLQSFNYKIDTRATSCQLYYSLAQDNVTVINHNPSSWNRRYGFNDVATFHSGEHDVAYAEACFTVGASYCPCAKPSTVYSCVTGKPKSANCPTGTSNRECNVQASGFKSKCDCTCNPSPLTTYDPRCLQARSMLGVGDHCEGLGILEDKCGGSNICNCSADAFVGWAMDSCLSNARCHIFSNLMLNGINSGTTCSTDFQLPNTEVVTGVCVKYDLYGSTGQGVFKEVKADYYNSWQNLLYDVNGNLNGFRDIVTNKTYLLRSCYSGRVSAAYHQDAPEPALLYRNLKCDYVFNNNISREETPLNYFDSYLGCVINADNSTEQSVDACDLRMGSGLCVNYSIAHRARRSVSTGYKLTTFEPFTVSIVNDSVESVGGLYEMQIPTNFTIASHQEFIQTRSPKVTIDCAAFVCGDYTACRQQLVDYGSFCDNINAILGEVNNLIDTMQLQVASALIQGVTLSSRLADGISGQIDDINFSPLLGCLGSDCSEGTKAAQGRSAIEDVLFDKVKLSDVGFVESYNNCTGGQEVRDLLCVQSFNGIKVLPPVLSESQISGYTAGATASAMFPPWSAAAGVPFALSVQYRINGLGVTMNVLSENQKMIASSFNNAIGAIQEGFDATNSALAKIQSVVNANAEALNNLLNQLSNRFGAISASLQEILSRLDALEAQAQIDRLINGRLTALNAYVSKQLSDMTLIKVSAAQAIEKVNECVKSQSPRINFCGNGNHILSLVQNAPYGLYFIHFSYVPTSFTTVNVSPGLCISGDRGLAPKAGYFVQDHGEWKFTGSNYYYPESITDKNSVVMSSCAVNYTKAPEVFLNTSITNLPDFKEELDKWFKNQTSIVPDLSFDIGKLNVTFLDLSYEMNRIQDAIKNLNESYINLKEIGTYEMYVKWPWYVWLLIGLAGVAVCVLLFFICCCTGCGSCCFKKCGNCCDEYGGRQAGIVIHNISSHED.

The first 13 residues, 1–13 (MLFVFLTLLPSCL), serve as a signal peptide directing secretion. Over 14-1301 (GYIGDFRCIN…GTYEMYVKWP (1288 aa)) the chain is Extracellular. Positions 15–296 (YIGDFRCINL…SYTSEIKCKT (282 aa)) constitute a BetaCoV S1-NTD domain. Intrachain disulfides connect cysteine 21–cysteine 158, cysteine 153–cysteine 187, cysteine 165–cysteine 246, cysteine 284–cysteine 294, and cysteine 329–cysteine 354. N-linked (GlcNAc...) asparagine; by host glycans are attached at residues asparagine 60 and asparagine 134. An N-linked (GlcNAc...) asparagine; by host glycan is attached at asparagine 192. The BetaCoV S1-CTD domain maps to 327–605 (PDCKIEEWLA…GINSGTTCST (279 aa)). A glycan (N-linked (GlcNAc...) asparagine; by host) is linked at asparagine 357. 2 disulfides stabilise this stretch: cysteine 372/cysteine 425 and cysteine 384/cysteine 603. 8 N-linked (GlcNAc...) asparagine; by host glycosylation sites follow: asparagine 435, asparagine 566, asparagine 664, asparagine 704, asparagine 727, asparagine 747, asparagine 776, and asparagine 793. Fusion peptide stretches follow at residues 906–927 (SAIE…VESY) and 925–945 (ESYN…VQSF). Asparagine 929 is a glycosylation site (N-linked (GlcNAc...) asparagine; by host). A disulfide bridge connects residues cysteine 930 and cysteine 941. The heptad repeat 1 stretch occupies residues 1006-1056 (QKMIASSFNNAIGAIQEGFDATNSALAKIQSVVNANAEALNNLLNQLSNRF). Positions 1035–1079 (QSVVNANAEALNNLLNQLSNRFGAISASLQEILSRLDALEAQAQI) form a coiled coil. N-linked (GlcNAc...) asparagine; by host glycans are attached at residues asparagine 1216, asparagine 1226, asparagine 1245, asparagine 1261, and asparagine 1282. Positions 1250 to 1290 (VPDLSFDIGKLNVTFLDLSYEMNRIQDAIKNLNESYINLKE) are heptad repeat 2. Residues 1263 to 1291 (TFLDLSYEMNRIQDAIKNLNESYINLKEI) are a coiled coil. Residues 1302–1322 (WYVWLLIGLAGVAVCVLLFFI) traverse the membrane as a helical segment. At 1323 to 1360 (CCCTGCGSCCFKKCGNCCDEYGGRQAGIVIHNISSHED) the chain is on the cytoplasmic side. The KxHxx motif lies at 1356–1360 (SSHED).

Belongs to the betacoronaviruses spike protein family. In terms of assembly, homotrimer; each monomer consists of a S1 and a S2 subunit. The resulting peplomers protrude from the virus surface as spikes. In terms of processing, specific enzymatic cleavages in vivo yield mature proteins. The precursor is processed into S1 and S2 by host cell furin or another cellular protease to yield the mature S1 and S2 proteins. Additionally, a second cleavage leads to the release of a fusion peptide after viral attachment to host cell receptor. The cytoplasmic Cys-rich domain is palmitoylated. Spike glycoprotein is digested within host endosomes.

It is found in the virion membrane. The protein resides in the host endoplasmic reticulum-Golgi intermediate compartment membrane. The protein localises to the host cell membrane. In terms of biological role, attaches the virion to the cell membrane by interacting with host receptor, initiating the infection. Functionally, mediates fusion of the virion and cellular membranes by acting as a class I viral fusion protein. Under the current model, the protein has at least three conformational states: pre-fusion native state, pre-hairpin intermediate state, and post-fusion hairpin state. During viral and target cell membrane fusion, the coiled coil regions (heptad repeats) assume a trimer-of-hairpins structure, positioning the fusion peptide in close proximity to the C-terminal region of the ectodomain. The formation of this structure appears to drive apposition and subsequent fusion of viral and target cell membranes. Its function is as follows. Acts as a viral fusion peptide which is unmasked following S2 cleavage occurring upon virus endocytosis. The sequence is that of Spike glycoprotein from Rat coronavirus (strain 681) (RCV-SDAV).